The chain runs to 97 residues: Small ribosomal subunit protein bS20 (97 aa).

The protein belongs to the bacterial ribosomal protein bS20 family.

In terms of biological role, binds directly to 16S ribosomal RNA. This Prochlorococcus marinus subsp. pastoris (strain CCMP1986 / NIES-2087 / MED4) protein is Small ribosomal subunit protein bS20.